The sequence spans 98 residues: Small ribosomal subunit protein uS19 (98 aa).

A disordered region spans residues 74–98 (FAPTRNYRGHAGGKSEKGGSAPRKK).

It belongs to the universal ribosomal protein uS19 family.

Its function is as follows. Protein S19 forms a complex with S13 that binds strongly to the 16S ribosomal RNA. The sequence is that of Small ribosomal subunit protein uS19 from Chlorobium chlorochromatii (strain CaD3).